The sequence spans 699 residues: eEF1A lysine and N-terminal methyltransferase (699 aa).

N-acetylmethionine is present on Met1. Ser267 is subject to Phosphoserine. The interval 433 to 460 (VSHRAQKKRKKDRKKHRPADTPEDLPAA) is disordered. A compositionally biased stretch (basic residues) spans 436-449 (RAQKKRKKDRKKHR).

Belongs to the methyltransferase superfamily. As to quaternary structure, forms a tripartite complex containing GAB1, METTL13 and SPRY2. Within the complex interacts with GAB1 and SPRY2.

It is found in the cytoplasm. The protein resides in the nucleus. It localises to the mitochondrion. It catalyses the reaction L-lysyl-[protein] + S-adenosyl-L-methionine = N(6)-methyl-L-lysyl-[protein] + S-adenosyl-L-homocysteine + H(+). The enzyme catalyses N(6)-methyl-L-lysyl-[protein] + S-adenosyl-L-methionine = N(6),N(6)-dimethyl-L-lysyl-[protein] + S-adenosyl-L-homocysteine + H(+). The catalysed reaction is N-terminal glycyl-L-lysyl-L-glutamyl-[protein] + 3 S-adenosyl-L-methionine = N-terminal N,N,N-trimethyl-glycyl-L-lysyl-L-glutamyl-[protein] + 3 S-adenosyl-L-homocysteine + 3 H(+). Dual methyltransferase that catalyzes methylation of elongation factor 1-alpha (EEF1A1 and EEF1A2) at two different positions, and is therefore involved in the regulation of mRNA translation. Via its C-terminus, methylates EEF1A1 and EEF1A2 at the N-terminal residue 'Gly-2'. Via its N-terminus dimethylates EEF1A1 and EEF1A2 at residue 'Lys-55'. Has no activity towards core histones H2A, H2B, H3 and H4. The sequence is that of eEF1A lysine and N-terminal methyltransferase (METTL13) from Bos taurus (Bovine).